The primary structure comprises 233 residues: Triosephosphate isomerase (233 aa).

8–10 (NWK) serves as a coordination point for substrate. His-91 functions as the Electrophile in the catalytic mechanism. Glu-155 acts as the Proton acceptor in catalysis. 2 residues coordinate substrate: Gly-161 and Ser-192.

The protein belongs to the triosephosphate isomerase family. In terms of assembly, homodimer.

It is found in the cytoplasm. It carries out the reaction D-glyceraldehyde 3-phosphate = dihydroxyacetone phosphate. Its pathway is carbohydrate biosynthesis; gluconeogenesis. The protein operates within carbohydrate degradation; glycolysis; D-glyceraldehyde 3-phosphate from glycerone phosphate: step 1/1. Functionally, involved in the gluconeogenesis. Catalyzes stereospecifically the conversion of dihydroxyacetone phosphate (DHAP) to D-glyceraldehyde-3-phosphate (G3P). This is Triosephosphate isomerase from Wolbachia sp. subsp. Brugia malayi (strain TRS).